The chain runs to 475 residues: Peripherin (475 aa).

The tract at residues 1–42 (MPSSASMSHHHSSGLRSSISSTSYRRTFGPPPSLSPGAFSYS) is disordered. The interval 1 to 103 (MPSSASMSHH…FLATRSNEKQ (103 aa)) is head. Over residues 14-26 (GLRSSISSTSYRR) the composition is skewed to low complexity. The residue at position 24 (Tyr-24) is a 3'-nitrotyrosine. 2 positions are modified to phosphoserine: Ser-35 and Ser-57. Residue Ser-66 is modified to Phosphoserine; by PKB/AKT1. An IF rod domain is found at 101 to 411 (EKQELQELND…KLLEGEESRI (311 aa)). The coil 1A stretch occupies residues 104–136 (ELQELNDRFANFIEKVRFLEQQNAALRGELSQA). Positions 137–147 (RGQEPARADQL) are linker 1. The segment at 148 to 243 (CQQELRELRR…KLHEEELRDL (96 aa)) is coil 1B. The tract at residues 244-266 (QVSVESQQVQQVEVEATVKPELT) is linker 2. Residues 267–409 (AALRDIRAQY…YRKLLEGEES (143 aa)) form a coil 2 region. Tyr-383 carries the 3'-nitrotyrosine modification. The interval 410 to 475 (RISVPVHSFA…DLDKSSIHSY (66 aa)) is tail. The segment at 453–475 (EKVVTESQKEQHSDLDKSSIHSY) is disordered. Position 475 is a phosphotyrosine (Tyr-475).

Belongs to the intermediate filament family. Forms homodimers (in vitro). Homopolymerizes into a filamentous network (in vitro). Forms heterodimers with NEFL, NEFM or NEFH (in vitro). Interacts with DST (via C-terminus). Interacts with RAB7A; the interaction is direct. Interacts with PRKCE (via phorbol-ester/DAG-type 2 domain). Post-translationally, phosphorylated; phosphorylation increases after nerve injury in regenerating neurons. In terms of tissue distribution, expressed in the sciatic nerve and at very low levels in the central nervous system (at protein level). Expressed in the spinal cord, in the sciatic nerve at the level of the dorsal root ganglion and in trigeminal nerves (at protein level). Expressed in the cranial nerves in the hindbrain, including the sensory and motor trigeminal neurons, the mesencephalic trigeminal neurons, the spinal trigeminal neurons, and in the facial nerve (at protein level). Expressed in the cerebellum, with expression in the inferior cerebellar peduncle and the lateral deep cerebellar nucleus (at protein level). Expressed in vestibulocochlear neurons, such as the anteroventral cochlear nucleus, the dorsal cochlear nucleus, the superficial granule cell layer and the granule cell lamina (at protein level). Expressed in glossopharyngeal, vagal and hypoglossal neurons (at protein level). Expressed in peripheral sensory neurons, in the dorsal root ganglia and the spinal cord, and to a lower extent in motor neurons. Expressed in the optic tract of the central nervous system, especially in the lateral geniculate nucleus and the superior colliculus. Expressed in neurons of the pineal stalk in the cortex. Expressed in the spinal trigeminal tract of the midbrain, in the medulla and in the medial cerebellar peduncle.

It is found in the cytoplasm. It localises to the cytoskeleton. The protein resides in the cell projection. The protein localises to the axon. Its subcellular location is the perikaryon. Its function is as follows. Class-III neuronal intermediate filament protein. May form an independent structural network without the involvement of other neurofilaments or may cooperate with the neuronal intermediate filament proteins NEFL, NEFH, NEFM and INA to form filamentous networks. Assembly of the neuronal intermediate filaments may be regulated by RAB7A. Plays a role in the development of unmyelinated sensory neurons. May be involved in axon elongation and axon regeneration after injury. Inhibits neurite extension in type II spiral ganglion neurons in the cochlea. In Mus musculus (Mouse), this protein is Peripherin (Prph).